The chain runs to 128 residues: Probable 4-amino-4-deoxy-L-arabinose-phosphoundecaprenol flippase subunit ArnF (128 aa).

The Cytoplasmic segment spans residues M1–G2. Residues L3–A23 traverse the membrane as a helical segment. Residues A24–H32 lie on the Periplasmic side of the membrane. Residues L33–G53 form a helical membrane-spanning segment. Residues L54 to A76 lie on the Cytoplasmic side of the membrane. Residues Y77 to W97 traverse the membrane as a helical segment. At E98–T100 the chain is on the periplasmic side. Residues F101 to L121 traverse the membrane as a helical segment. At P122–Y128 the chain is on the cytoplasmic side.

Belongs to the ArnF family. Heterodimer of ArnE and ArnF.

Its subcellular location is the cell inner membrane. The protein operates within bacterial outer membrane biogenesis; lipopolysaccharide biosynthesis. Functionally, translocates 4-amino-4-deoxy-L-arabinose-phosphoundecaprenol (alpha-L-Ara4N-phosphoundecaprenol) from the cytoplasmic to the periplasmic side of the inner membrane. The polypeptide is Probable 4-amino-4-deoxy-L-arabinose-phosphoundecaprenol flippase subunit ArnF (Escherichia coli O7:K1 (strain IAI39 / ExPEC)).